We begin with the raw amino-acid sequence, 197 residues long: Putative peptidyl-prolyl cis-trans isomerase (197 aa).

The 182-residue stretch at 14–195 (GEIKVVMHTN…HDVVIESIDV (182 aa)) folds into the PPIase cyclophilin-type domain.

The protein belongs to the cyclophilin-type PPIase family.

The catalysed reaction is [protein]-peptidylproline (omega=180) = [protein]-peptidylproline (omega=0). In terms of biological role, PPIases accelerate the folding of proteins. It catalyzes the cis-trans isomerization of proline imidic peptide bonds in oligopeptides. The protein is Putative peptidyl-prolyl cis-trans isomerase of Staphylococcus aureus (strain COL).